Here is a 365-residue protein sequence, read N- to C-terminus: Ubiquitin carboxyl-terminal hydrolase 4 (365 aa).

G2 is lipidated: N-myristoyl glycine. The 340-residue stretch at 23-362 (FGFENFGNTC…HGYILLYESL (340 aa)) folds into the USP domain. Catalysis depends on C32, which acts as the Nucleophile. Positions 81 to 98 (KKKTGVIAPKRFVQRLKK) match the Bipartite nuclear localization signal motif. H310 serves as the catalytic Proton acceptor.

The protein belongs to the peptidase C19 family. Constitutively and ubiquitously expressed.

It localises to the nucleus. The enzyme catalyses Thiol-dependent hydrolysis of ester, thioester, amide, peptide and isopeptide bonds formed by the C-terminal Gly of ubiquitin (a 76-residue protein attached to proteins as an intracellular targeting signal).. In terms of biological role, recognizes and hydrolyzes the peptide bond at the C-terminal Gly of ubiquitin. Involved in the processing of poly-ubiquitin precursors as well as that of ubiquitinated proteins. Required for the correct development of pollen. In Arabidopsis thaliana (Mouse-ear cress), this protein is Ubiquitin carboxyl-terminal hydrolase 4 (UBP4).